The chain runs to 267 residues: MTTKIKFTKMHGAGNDYIYVDTTRYPIAAPEKKAIEWSKFHTGIGSDGLILIGSSDKADFSMRIFNADGSEAMMCGNGSRCVGKYVYEYGLTAKKEITLDTRSGIKVLKLHVEGGKVTAVTVDMGSPLETEAVDFGDQFPFQSTRVSMGNPHLVTFVEDITQINLPEIGPQLENYHLFPDRTNVEFAQIVGKDTIRMRVWERGSGITQACGTGACATAVAAVLHGLAGRKCDIIMDGGTVTIEWEEATGHILMTGPATKVFDGEMEG.

Residues Asn-15 and Asn-66 each contribute to the substrate site. The active-site Proton donor is Cys-75. Substrate contacts are provided by residues 76–77 (GN), Asn-150, Asn-183, and 201–202 (ER). The active-site Proton acceptor is Cys-210. Substrate is bound at residue 211–212 (GT).

Belongs to the diaminopimelate epimerase family. In terms of assembly, homodimer.

The protein localises to the cytoplasm. It carries out the reaction (2S,6S)-2,6-diaminopimelate = meso-2,6-diaminopimelate. It participates in amino-acid biosynthesis; L-lysine biosynthesis via DAP pathway; DL-2,6-diaminopimelate from LL-2,6-diaminopimelate: step 1/1. In terms of biological role, catalyzes the stereoinversion of LL-2,6-diaminopimelate (L,L-DAP) to meso-diaminopimelate (meso-DAP), a precursor of L-lysine and an essential component of the bacterial peptidoglycan. The polypeptide is Diaminopimelate epimerase (Bacteroides thetaiotaomicron (strain ATCC 29148 / DSM 2079 / JCM 5827 / CCUG 10774 / NCTC 10582 / VPI-5482 / E50)).